A 201-amino-acid polypeptide reads, in one-letter code: Superoxide dismutase [Mn] (201 aa).

Positions 27, 81, 163, and 167 each coordinate Mn(2+).

This sequence belongs to the iron/manganese superoxide dismutase family. As to quaternary structure, homodimer. The cofactor is Mn(2+).

Its subcellular location is the secreted. The catalysed reaction is 2 superoxide + 2 H(+) = H2O2 + O2. Functionally, destroys superoxide anion radicals which are normally produced within the cells and which are toxic to biological systems. The polypeptide is Superoxide dismutase [Mn] (sodA) (Streptococcus pyogenes).